Here is a 480-residue protein sequence, read N- to C-terminus: Cysteine--tRNA ligase (480 aa).

Cys31 contributes to the Zn(2+) binding site. Residues 33-43 (PTVYDSSHIGH) carry the 'HIGH' region motif. The Zn(2+) site is built by Cys211, His236, and Glu240. The 'KMSKS' region motif lies at 269-273 (KMSKS). Lys272 is an ATP binding site.

Belongs to the class-I aminoacyl-tRNA synthetase family. Zn(2+) serves as cofactor.

The enzyme catalyses tRNA(Cys) + L-cysteine + ATP = L-cysteinyl-tRNA(Cys) + AMP + diphosphate. This Encephalitozoon cuniculi (strain GB-M1) (Microsporidian parasite) protein is Cysteine--tRNA ligase.